Here is a 414-residue protein sequence, read N- to C-terminus: Collagenase (414 aa).

The protein belongs to the peptidase U32 family. In terms of assembly, homodimer. A metal cation is required as a cofactor.

In terms of biological role, has collagenase activity. Hydrolyzes type I collagen. May play a role in virulence. This is Collagenase (prtC) from Porphyromonas gingivalis (strain ATCC BAA-308 / W83).